Here is an 841-residue protein sequence, read N- to C-terminus: Probable outer membrane usher protein EcpC (841 aa).

An N-terminal signal peptide occupies residues 1–29 (MPLRRFSPGLKAQFAFGMVFLFVQPDASA).

It belongs to the EcpC/MatD family.

In terms of biological role, part of the ecpRABCDE operon, which encodes the E.coli common pilus (ECP). ECP is found in both commensal and pathogenic strains and plays a dual role in early-stage biofilm development and host cell recognition. The chain is Probable outer membrane usher protein EcpC (ecpC) from Escherichia coli O157:H7.